The chain runs to 644 residues: Macrolide export ATP-binding/permease protein MacB (644 aa).

In terms of domain architecture, ABC transporter spans 4–242; the sequence is IECKNINRCF…SNVGRIREKA (239 aa). 40 to 47 contributes to the ATP binding site; sequence GQSGSGKS. 4 helical membrane passes run 270-290, 524-544, 574-594, and 607-627; these read LLTMLGIIIGIASVVSVVALG, IALISLVVGGIGVMNIMLVSV, LICIIGGLVGVGLSAAVSLVF, and AASVIGAVACSTGIGIAFGFM.

This sequence belongs to the ABC transporter superfamily. Macrolide exporter (TC 3.A.1.122) family. As to quaternary structure, homodimer.

It localises to the cell inner membrane. Functionally, non-canonical ABC transporter that contains transmembrane domains (TMD), which form a pore in the inner membrane, and an ATP-binding domain (NBD), which is responsible for energy generation. Confers resistance against macrolides. This is Macrolide export ATP-binding/permease protein MacB from Neisseria gonorrhoeae (strain ATCC 700825 / FA 1090).